The primary structure comprises 272 residues: Acetyl-coenzyme A carboxylase carboxyl transferase subunit alpha (272 aa).

In terms of domain architecture, CoA carboxyltransferase C-terminal spans 1-248 (MDKDFMKINV…KKTIVDSLLE (248 aa)).

The protein belongs to the AccA family. In terms of assembly, acetyl-CoA carboxylase is a heterohexamer composed of biotin carboxyl carrier protein (AccB), biotin carboxylase (AccC) and two subunits each of ACCase subunit alpha (AccA) and ACCase subunit beta (AccD).

It localises to the cytoplasm. It catalyses the reaction N(6)-carboxybiotinyl-L-lysyl-[protein] + acetyl-CoA = N(6)-biotinyl-L-lysyl-[protein] + malonyl-CoA. It functions in the pathway lipid metabolism; malonyl-CoA biosynthesis; malonyl-CoA from acetyl-CoA: step 1/1. Component of the acetyl coenzyme A carboxylase (ACC) complex. First, biotin carboxylase catalyzes the carboxylation of biotin on its carrier protein (BCCP) and then the CO(2) group is transferred by the carboxyltransferase to acetyl-CoA to form malonyl-CoA. The protein is Acetyl-coenzyme A carboxylase carboxyl transferase subunit alpha of Clostridium beijerinckii (strain ATCC 51743 / NCIMB 8052) (Clostridium acetobutylicum).